Reading from the N-terminus, the 215-residue chain is UPF0502 protein YceH (215 aa).

It belongs to the UPF0502 family.

The protein is UPF0502 protein YceH of Salmonella paratyphi B (strain ATCC BAA-1250 / SPB7).